The following is a 1585-amino-acid chain: uncharacterized protein (1585 aa).

The stretch at 12-59 (DKISRKLRMIQGNAERLKRAANGPLIFEAEDRTERVMRQIDRSANRLT) forms a coiled coil. 2 disordered regions span residues 586–627 (PKRT…SLPR) and 645–692 (IRRR…NPTR). Residues 618 to 627 (TATGPTSLPR) show a composition bias toward polar residues. Basic residues predominate over residues 645 to 655 (IRRRRGKRVLG). Residues 661 to 672 (NRMNPSDSSIAV) are compositionally biased toward polar residues. S970 and S972 each carry phosphoserine.

The protein to B.subtilis XkdO.

This is an uncharacterized protein from Bacillus subtilis (strain 168).